We begin with the raw amino-acid sequence, 307 residues long: MTDSTYDVNRVRAYLQGLQMRIADALGAFDGTPLAADTWRRGPGERLRGGGCTRILEAGGFFERAGIGFSDVAGDALPPSASASRPQLAGRGFEALGVSLVLHPRNPYCPTVHMNVRMLIATKPGEAPVFWFGGGMDLTPIYGFEEDARHFHRTCRAALEPFGAELYPRFKKWCDDYFFLKHRNEARGIGGIFFDDFSELGFERSFEMLQSVGDAFLPSYLPIVERRRDTPYGERERAFQAYRRGRYVEFNLVFDRGTLFGLQSGGRTESILLSMPPTAGWRYDWHPDPGTPEARLQSEFLVPRDWA.

Ser-99 is a substrate binding site. His-103 and His-113 together coordinate a divalent metal cation. Residue His-113 is the Proton donor of the active site. Asn-115–Arg-117 lines the substrate pocket. 2 residues coordinate a divalent metal cation: His-152 and His-182. Positions Tyr-247–Arg-282 are important for dimerization. Substrate is bound at residue Gly-265 to Arg-267.

This sequence belongs to the aerobic coproporphyrinogen-III oxidase family. As to quaternary structure, homodimer. A divalent metal cation serves as cofactor.

The protein resides in the cytoplasm. The catalysed reaction is coproporphyrinogen III + O2 + 2 H(+) = protoporphyrinogen IX + 2 CO2 + 2 H2O. The protein operates within porphyrin-containing compound metabolism; protoporphyrin-IX biosynthesis; protoporphyrinogen-IX from coproporphyrinogen-III (O2 route): step 1/1. Involved in the heme biosynthesis. Catalyzes the aerobic oxidative decarboxylation of propionate groups of rings A and B of coproporphyrinogen-III to yield the vinyl groups in protoporphyrinogen-IX. The sequence is that of Oxygen-dependent coproporphyrinogen-III oxidase from Burkholderia pseudomallei (strain 1106a).